The following is a 366-amino-acid chain: Ubiquitin carboxyl-terminal hydrolase 46 (366 aa).

Residues 35–365 form the USP domain; sequence FGLVNFGNTC…SGYILFYQSR (331 aa). C44 functions as the Nucleophile in the catalytic mechanism. Zn(2+) is bound by residues C182, C185, C229, and C232. The active-site Proton acceptor is the H313.

The protein belongs to the peptidase C19 family. USP12/USP46 subfamily. In terms of assembly, interacts with WDR48. Interacts with WDR20. Interacts with DMWD. Component of the USP46/WDR20/WDR48 deubiquitinating complex. In terms of tissue distribution, broadly expressed.

It localises to the cytoplasm. It carries out the reaction Thiol-dependent hydrolysis of ester, thioester, amide, peptide and isopeptide bonds formed by the C-terminal Gly of ubiquitin (a 76-residue protein attached to proteins as an intracellular targeting signal).. Its activity is regulated as follows. Activated by interaction with WDR48. Deubiquitinating enzyme that plays a role in behavior, possibly by regulating GABA action. May act by mediating the deubiquitination of GAD1/GAD67. Has almost no deubiquitinating activity by itself and requires the interaction with WDR48 to have a high activity. Not involved in deubiquitination of monoubiquitinated FANCD2. The sequence is that of Ubiquitin carboxyl-terminal hydrolase 46 (USP46) from Homo sapiens (Human).